The primary structure comprises 262 residues: Hydroxyethylthiazole kinase (262 aa).

Met-43 lines the substrate pocket. Residues Arg-118 and Thr-164 each coordinate ATP. Ala-191 is a binding site for substrate.

The protein belongs to the Thz kinase family. Mg(2+) is required as a cofactor.

It carries out the reaction 5-(2-hydroxyethyl)-4-methylthiazole + ATP = 4-methyl-5-(2-phosphooxyethyl)-thiazole + ADP + H(+). It functions in the pathway cofactor biosynthesis; thiamine diphosphate biosynthesis; 4-methyl-5-(2-phosphoethyl)-thiazole from 5-(2-hydroxyethyl)-4-methylthiazole: step 1/1. In terms of biological role, catalyzes the phosphorylation of the hydroxyl group of 4-methyl-5-beta-hydroxyethylthiazole (THZ). The chain is Hydroxyethylthiazole kinase from Cereibacter sphaeroides (strain ATCC 17025 / ATH 2.4.3) (Rhodobacter sphaeroides).